Consider the following 754-residue polypeptide: MWKLLPAAGPAGGEPYRLLTGVEYVVGRKNCAILIENDQSISRNHAVLTANFSVTNLSQTDEIPVLTLKDNSKYGTFVNEEKMQNGFSRTLKSGDGITFGVFGSKFRIEYEPLVACSSCLDVSGKTALNQAILQLGGFTVNNWTEECTHLVMVSVKVTIKTICALICGRPIVKPEYFTEFLKAVESKKQPPQIESFYPPLDEPSIGSKNVDLSGRQERKQIFKGKTFIFLNAKQHKKLSSAVVFGGGEARLITEENEEEHNFFLAPGTCVVDTGITNSQTLIPDCQKKWIQSIMDMLQRQGLRPIPEAEIGLAVIFMTTKNYCDPQGHPSTGLKTTTPGPSLSQGVSVDEKLMPSAPVNTTTYVADTESEQADTWDLSERPKEIKVSKMEQKFRMLSQDAPTVKESCKTSSNNNSMVSNTLAKMRIPNYQLSPTKLPSINKSKDRASQQQQTNSIRNYFQPSTKKRERDEENQEMSSCKSARIETSCSLLEQTQPATPSLWKNKEQHLSENEPVDTNSDNNLFTDTDLKSIVKNSASKSHAAEKLRSNKKREMDDVAIEDEVLEQLFKDTKPELEIDVKVQKQEEDVNVRKRPRMDIETNDTFSDEAVPESSKISQENEIGKKRELKEDSLWSAKEISNNDKLQDDSEMLPKKLLLTEFRSLVIKNSTSRNPSGINDDYGQLKNFKKFKKVTYPGAGKLPHIIGGSDLIAHHARKNTELEEWLRQEMEVQNQHAKEESLADDLFRYNPYLKRRR.

The FHA domain maps to 24-83 (YVVGRKNCAILIENDQSISRNHAVLTANFSVTNLSQTDEIPVLTLKDNSKYGTFVNEEKM). 2 BRCT domains span residues 105 to 181 (KFRI…TEFL) and 224 to 315 (GKTF…LAVI). The segment at 111-328 (EPLVACSSCL…TKNYCDPQGH (218 aa)) is mediates interaction with SP100. The tract at residues 221–402 (IFKGKTFIFL…FRMLSQDAPT (182 aa)) is interaction with MTOR, MAPKAP1 and RICTOR. Residue Ser278 is modified to Phosphoserine; by ATM. The interval 326–346 (QGHPSTGLKTTTPGPSLSQGV) is disordered. Residues 328–346 (HPSTGLKTTTPGPSLSQGV) are compositionally biased toward polar residues. Thr337 is modified (phosphothreonine). Residue Ser343 is modified to Phosphoserine; by ATM. Ser347 is modified (phosphoserine). Position 388 is an N6-lactoyllysine (Lys388). Disordered stretches follow at residues 396-415 (LSQD…NNNS) and 430-478 (QLSP…MSSC). Ser397 is subject to Phosphoserine. Thr402 bears the Phosphothreonine mark. Composition is skewed to polar residues over residues 430 to 440 (QLSPTKLPSIN) and 447 to 462 (SQQQ…FQPS). Ser432 is modified (phosphoserine; by CDK2). Lys435 participates in a covalent cross-link: Glycyl lysine isopeptide (Lys-Gly) (interchain with G-Cter in ubiquitin). The short motif at 461–467 (PSTKKRE) is the Nuclear localization signal element. 2 positions are modified to phosphoserine: Ser509 and Ser518. Residues Lys529, Lys571, and Lys582 each participate in a glycyl lysine isopeptide (Lys-Gly) (interchain with G-Cter in SUMO2) cross-link. Phosphoserine occurs at positions 615 and 673. Residues Lys686, Lys690, and Lys735 each participate in a glycyl lysine isopeptide (Lys-Gly) (interchain with G-Cter in ubiquitin) cross-link. The short motif at 740 to 749 (ADDLFRYNPY) is the FxF/Y motif element.

It belongs to the Nibrin family. As to quaternary structure, component of the MRN complex composed of two heterodimers RAD50 and MRE11 associated with a single NBN. The MRN complexes dimerize on DNA to form joined MRN-MRN oligomers required for DNA double-strand break repair. As part of the MRN complex, interacts with MCM9; the interaction recruits the complex to DNA repair sites. Component of the BASC complex, at least composed of BRCA1, MSH2, MSH6, MLH1, ATM, BLM, RAD50, MRE11 and NBN. Interacts with histone H2AX; this requires phosphorylation of H2AX on 'Ser-139' and promotes NBN recruitment to DNA damage sites. Interacts with (phosphorylated) MDC1; promoting NBN recruitment to DNA damage sites. Interacts with (phosphorylated) RAD17; promoting NBN recruitment to DNA damage sites. Interacts (via FxF/Y motif) with ATM. Interacts with HJURP. Interacts with INTS3. Interacts with KPNA2. Interacts with TERF2; interaction is disrupted upon NBN phosphorylation by CDK2. Interacts with (phosphorylated) RBBP8/CtIP; the interaction links the role of the MRN complex in DNA double-strand break sensing to resection. Interacts with SP100; recruits NBN to PML bodies. Interacts with ATF2. Interacts with MTOR, MAPKAP1 isoform 2 and RICTOR; indicative for an association with the mTORC2 complex. Interacts with MRNIP. Interacts with UFL1; promoting UFL1 recruitment to double-strand breaks following DNA damage. Interacts with CYREN (via XLF motif). (Microbial infection) Interacts with herpes simplex virus 1 protein UL12. Phosphorylated by ATM in response of ionizing radiation, and such phosphorylation is responsible intra-S phase checkpoint control and telomere maintenance. Phosphorylated at Ser-432 by CDK2 in S/G2 phases abolishes interaction with TERF2, enabling DCLRE1B/Apollo recruitment to telomeres. Phosphorylation at Ser-432 in response to dysfunctional telomeres promotes non-homologous end joining repair at telomeres, while dephosphorylation by PPP1CA promotes microhomology-mediated end-joining (MMEJ) repair. Post-translationally, ubiquitinated at Lys-435 via 'Lys-6'-linked ubiquitin chains by RNF8, promoting NBN recruitment to DNA double-strand breaks (DSBs). Ubiquitinated at Lys-686 and Lys-689 via 'Lys-63'-linked ubiquitin chains by PELI1: ubiquitination takes place following PELI1 phosphorylation and promotes ATM activation and DNA repair. Ubiquitinated at Lys-735 via 'Lys-63'-linked ubiquitin chains by the SCF(SKP2) complex: ubiquitination takes place following SKP2 phosphorylation and promotes ATM activation and DNA repair. In terms of processing, lactylation at Lys-388 by KAT5 in response to DNA damage promotes recruitment of the MRN complex to DNA damage sites. Delactylated by HDAC3. In terms of tissue distribution, ubiquitous. Expressed at high levels in testis.

It localises to the nucleus. The protein resides in the chromosome. Its subcellular location is the PML body. The protein localises to the telomere. Its function is as follows. Component of the MRN complex, which plays a central role in double-strand break (DSB) repair, DNA recombination, maintenance of telomere integrity and meiosis. The MRN complex is involved in the repair of DNA double-strand breaks (DSBs) via homologous recombination (HR), an error-free mechanism which primarily occurs during S and G2 phases. The complex (1) mediates the end resection of damaged DNA, which generates proper single-stranded DNA, a key initial steps in HR, and is (2) required for the recruitment of other repair factors and efficient activation of ATM and ATR upon DNA damage. The MRN complex possesses single-strand endonuclease activity and double-strand-specific 3'-5' exonuclease activity, which are provided by MRE11, to initiate end resection, which is required for single-strand invasion and recombination. Within the MRN complex, NBN acts as a protein-protein adapter, which specifically recognizes and binds phosphorylated proteins, promoting their recruitment to DNA damage sites. Recruits MRE11 and RAD50 components of the MRN complex to DSBs in response to DNA damage. Promotes the recruitment of PI3/PI4-kinase family members ATM, ATR, and probably DNA-PKcs to the DNA damage sites, activating their functions. Mediates the recruitment of phosphorylated RBBP8/CtIP to DSBs, leading to cooperation between the MRN complex and RBBP8/CtIP to initiate end resection. RBBP8/CtIP specifically promotes the endonuclease activity of the MRN complex to clear DNA ends containing protein adducts. The MRN complex is also required for the processing of R-loops. NBN also functions in telomere length maintenance via its interaction with TERF2: interaction with TERF2 during G1 phase preventing recruitment of DCLRE1B/Apollo to telomeres. NBN also promotes DNA repair choice at dysfunctional telomeres: NBN phosphorylation by CDK2 promotes non-homologous end joining repair at telomeres, while unphosphorylated NBN promotes microhomology-mediated end-joining (MMEJ) repair. Enhances AKT1 phosphorylation possibly by association with the mTORC2 complex. This Homo sapiens (Human) protein is Nibrin.